We begin with the raw amino-acid sequence, 210 residues long: MPPYTVVYFPVRGRCAALRMLLADQGQSWKEEVVTMETWQEGSLKASCLYGQLPKFQDGDLTLYQSNTFLRHLGRTLGLYGKDQREAALVDMVNDGVEDLRCKYLSLIYTNYEAGKDDYVKALPGQLKPFETLLSQNQGGKTFIVGDQISFADYNLLDLLLIHEVLAPGCLDAFPLLSAYVARLSARPKLKAFLASPEHVNLPINGNGKQ.

A GST N-terminal domain is found at 2–81; it reads PPYTVVYFPV…HLGRTLGLYG (80 aa). At Y4 the chain carries Phosphotyrosine; by EGFR. Glutathione-binding positions include Y8, R14, W39, K45, and 52-53; that span reads QL. T62 bears the Phosphothreonine mark. Position 65-66 (65-66) interacts with glutathione; that stretch reads QS. The GST C-terminal domain occupies 83–204; the sequence is DQREAALVDM…ASPEHVNLPI (122 aa). K103 and K116 each carry N6-succinyllysine. At K128 the chain carries N6-acetyllysine.

Belongs to the GST superfamily. Pi family. Homodimer. Interacts with CDK5.

It localises to the cytoplasm. Its subcellular location is the mitochondrion. The protein resides in the nucleus. The catalysed reaction is RX + glutathione = an S-substituted glutathione + a halide anion + H(+). It carries out the reaction prostaglandin J2 + glutathione = prostaglandin J2-S-(R)-glutathione. It catalyses the reaction prostaglandin J2 + glutathione = prostaglandin J2-S-(S)-glutathione. The enzyme catalyses prostaglandin A2 + glutathione = prostaglandin A2-S-(S)-glutathione. The catalysed reaction is 11(S)-hydroxy-14(S),15(S)-epoxy-(5Z,8Z,12E)-eicosatrienoate + glutathione = (11S,15S)-dihydroxy-14(R)-S-glutathionyl-(5Z,8Z,12E)-eicosatrienoate. Conjugation of reduced glutathione to a wide number of exogenous and endogenous hydrophobic electrophiles. Involved in the formation of glutathione conjugates of both prostaglandin A2 (PGA2) and prostaglandin J2 (PGJ2). Participates in the formation of novel hepoxilin regioisomers. Negatively regulates CDK5 activity via p25/p35 translocation to prevent neurodegeneration. The protein is Glutathione S-transferase P (GSTP1) of Macaca mulatta (Rhesus macaque).